A 79-amino-acid chain; its full sequence is uncharacterized protein (79 aa).

A helical membrane pass occupies residues 15-37; that stretch reads KSIVSVLALTSLGCGVFVISATA.

The protein resides in the membrane. This is an uncharacterized protein from Dictyostelium discoideum (Social amoeba).